The following is a 339-amino-acid chain: Oncoprotein MEQ (339 aa).

Positions 1–80 (MSQEPEPGAM…ARRRRRKQTD (80 aa)) are disordered. Ser-42 is subject to Phosphoserine; by host CDK2. A basic motif region spans residues 57-84 (KQKLERRRKRNRDAARRRRRKQTDYVDK). The bZIP domain occupies 57–120 (KQKLERRRKR…TSLRVQLACH (64 aa)). Residues 60–77 (LERRRKRNRDAARRRRRK) are compositionally biased toward basic residues. A Nuclear localization signal motif is present at residues 62–78 (RRRKRNRDAARRRRRKQ). A leucine-zipper region spans residues 85–113 (LHEACEELQRANEHLRKEIRDLRTECTSL). Residues 120–339 (HEPVCPMAVP…VWWFPGDGRP (220 aa)) form a transactivation domain region. Positions 145–160 (PEPPICTPPPPSPDEP) are enriched in pro residues. Residues 145–172 (PEPPICTPPPPSPDEPNAPHCSGSQPPI) form a disordered region.

It belongs to the bZIP family. Jun subfamily. Homodimer. Interacts with host JUN; this interaction allows MEQ to engage in host cell processes by disguising itself as a cellular JUN. In terms of processing, phosphorylated by host CDK2; this phosphorylation greatly reduces the DNA binding activity of MEQ.

It localises to the host nucleus. It is found in the host nucleolus. Functionally, functions as a DNA-binding transcription factor. Promotes transformation, host cell growth, host cell-cycle progression through G1/S phase, and possesses antiapoptotic activity. Forms functional heterodimers with host JUN. These heterodimers bind with high affinity DNA sequences called MEQ-responsive elements MERE I (TGACA/GTCA), while MEQ homodimers bind a second type of sites termed MERE II (ACACA). Both homo and heterodimerization of MEQ are required for oncogenesis. The polypeptide is Oncoprotein MEQ (MDV005) (Gallid herpesvirus 2 (strain Chicken/Md5/ATCC VR-987) (GaHV-2)).